The chain runs to 72 residues: SPbeta prophage-derived uncharacterized protein YopT (72 aa).

Homodimer.

The chain is SPbeta prophage-derived uncharacterized protein YopT (yopT) from Bacillus subtilis (strain 168).